Here is a 236-residue protein sequence, read N- to C-terminus: Leucyl/phenylalanyl-tRNA--protein transferase (236 aa).

It belongs to the L/F-transferase family.

It localises to the cytoplasm. The catalysed reaction is N-terminal L-lysyl-[protein] + L-leucyl-tRNA(Leu) = N-terminal L-leucyl-L-lysyl-[protein] + tRNA(Leu) + H(+). The enzyme catalyses N-terminal L-arginyl-[protein] + L-leucyl-tRNA(Leu) = N-terminal L-leucyl-L-arginyl-[protein] + tRNA(Leu) + H(+). It catalyses the reaction L-phenylalanyl-tRNA(Phe) + an N-terminal L-alpha-aminoacyl-[protein] = an N-terminal L-phenylalanyl-L-alpha-aminoacyl-[protein] + tRNA(Phe). Functionally, functions in the N-end rule pathway of protein degradation where it conjugates Leu, Phe and, less efficiently, Met from aminoacyl-tRNAs to the N-termini of proteins containing an N-terminal arginine or lysine. The sequence is that of Leucyl/phenylalanyl-tRNA--protein transferase from Shewanella pealeana (strain ATCC 700345 / ANG-SQ1).